Consider the following 145-residue polypeptide: D-aminoacyl-tRNA deacylase (145 aa).

A Gly-cisPro motif, important for rejection of L-amino acids motif is present at residues 137–138 (GP).

It belongs to the DTD family. In terms of assembly, homodimer.

The protein resides in the cytoplasm. It catalyses the reaction glycyl-tRNA(Ala) + H2O = tRNA(Ala) + glycine + H(+). The enzyme catalyses a D-aminoacyl-tRNA + H2O = a tRNA + a D-alpha-amino acid + H(+). Functionally, an aminoacyl-tRNA editing enzyme that deacylates mischarged D-aminoacyl-tRNAs. Also deacylates mischarged glycyl-tRNA(Ala), protecting cells against glycine mischarging by AlaRS. Acts via tRNA-based rather than protein-based catalysis; rejects L-amino acids rather than detecting D-amino acids in the active site. By recycling D-aminoacyl-tRNA to D-amino acids and free tRNA molecules, this enzyme counteracts the toxicity associated with the formation of D-aminoacyl-tRNA entities in vivo and helps enforce protein L-homochirality. This is D-aminoacyl-tRNA deacylase from Shewanella woodyi (strain ATCC 51908 / MS32).